The primary structure comprises 279 residues: Undecaprenyl-diphosphatase (279 aa).

8 helical membrane-spanning segments follow: residues 2-22 (LIIE…TEWL), 44-64 (AFIE…VMLI), 85-105 (WQLW…AVPL), 113-133 (FYFM…FIWI), 163-183 (VLSI…AIIL), 188-208 (TVAA…YSGL), 223-243 (AQVL…LLAI), and 255-275 (FTIF…YSFF).

This sequence belongs to the UppP family.

It localises to the cell membrane. It catalyses the reaction di-trans,octa-cis-undecaprenyl diphosphate + H2O = di-trans,octa-cis-undecaprenyl phosphate + phosphate + H(+). Functionally, catalyzes the dephosphorylation of undecaprenyl diphosphate (UPP). Confers resistance to bacitracin. This is Undecaprenyl-diphosphatase from Streptococcus pyogenes serotype M12 (strain MGAS2096).